The primary structure comprises 376 residues: Succinyl-diaminopimelate desuccinylase (376 aa).

A Zn(2+)-binding site is contributed by His67. The active site involves Asp69. Asp100 contributes to the Zn(2+) binding site. Glu134 serves as the catalytic Proton acceptor. Residues Glu135, Glu163, and His349 each contribute to the Zn(2+) site.

This sequence belongs to the peptidase M20A family. DapE subfamily. As to quaternary structure, homodimer. The cofactor is Zn(2+). Co(2+) is required as a cofactor.

It catalyses the reaction N-succinyl-(2S,6S)-2,6-diaminopimelate + H2O = (2S,6S)-2,6-diaminopimelate + succinate. The protein operates within amino-acid biosynthesis; L-lysine biosynthesis via DAP pathway; LL-2,6-diaminopimelate from (S)-tetrahydrodipicolinate (succinylase route): step 3/3. Functionally, catalyzes the hydrolysis of N-succinyl-L,L-diaminopimelic acid (SDAP), forming succinate and LL-2,6-diaminopimelate (DAP), an intermediate involved in the bacterial biosynthesis of lysine and meso-diaminopimelic acid, an essential component of bacterial cell walls. The chain is Succinyl-diaminopimelate desuccinylase from Nitrosomonas europaea (strain ATCC 19718 / CIP 103999 / KCTC 2705 / NBRC 14298).